The sequence spans 147 residues: Siroheme decarboxylase NirG subunit (147 aa).

It belongs to the Ahb/Nir family. As to quaternary structure, probably forms a complex composed of NirD, NirL, NirG and NirH. All proteins are required for the total conversion of siroheme to didecarboxysiroheme.

It carries out the reaction siroheme + 2 H(+) = 12,18-didecarboxysiroheme + 2 CO2. It participates in porphyrin-containing compound metabolism. Its function is as follows. Involved in heme d1 biosynthesis. Catalyzes the decarboxylation of siroheme into didecarboxysiroheme. The protein is Siroheme decarboxylase NirG subunit of Stutzerimonas stutzeri (Pseudomonas stutzeri).